Here is a 193-residue protein sequence, read N- to C-terminus: V-type ATP synthase subunit E (193 aa).

Belongs to the V-ATPase E subunit family.

Its function is as follows. Produces ATP from ADP in the presence of a proton gradient across the membrane. The sequence is that of V-type ATP synthase subunit E from Anaeromyxobacter sp. (strain Fw109-5).